The sequence spans 132 residues: CLAVATA3/ESR (CLE)-related protein TDIF (132 aa).

The N-terminal stretch at 1–26 is a signal peptide; that stretch reads MDIDLLWSFGGWFFILFPETINYCMA. The chain crosses the membrane as a helical span at residues 42-62; it reads SCSSLFFVALLIITILITMLQ. Residues 68-77 show a composition bias toward polar residues; it reads EVTSLPTHQP. Residues 68–132 are disordered; that stretch reads EVTSLPTHQP…PSGPNPISNR (65 aa). Positions 87–96 are enriched in low complexity; it reads STSSTATTTT. Basic residues predominate over residues 101–111; the sequence is KRTHHQSHPKP. 2 positions are modified to hydroxyproline: proline 123 and proline 126. O-linked (Ara...) hydroxyproline glycosylation occurs at proline 126.

It belongs to the CLV3/ESR signal peptide family. Interacts specifically with the leucine-rich repeat receptor-like protein kinase TDR. In terms of processing, the TDIFp peptide contains two hydroxprolines, but hydroxylation had no direct effect on TDIFp activity. The O-glycosylation (arabinosylation) of the hydroxyproline Pro-126 enhances binding affinity of the TDIFp peptide for its receptor.

Its subcellular location is the secreted. The protein localises to the extracellular space. The protein resides in the cell membrane. Functionally, extracellular signal peptide that regulates cell fate. Represses tracheary element differentiation but promotes the formation of procambial cells adjacent to phloem cells in the veins. The polypeptide is CLAVATA3/ESR (CLE)-related protein TDIF (Zinnia elegans (Garden zinnia)).